Consider the following 258-residue polypeptide: Peptidase inhibitor 15 (258 aa).

A signal peptide spans 1 to 19; sequence MIAISAVSSALLFSLLCEA. A propeptide spanning residues 20–60 is cleaved from the precursor; that stretch reads STVVLLNSTDSSPPTNNFTDIEAALKAQLDSADIPKARRKR. Residues N26, N36, and N124 are each glycosylated (N-linked (GlcNAc...) asparagine). The 141-residue stretch at 71-211 folds into the SCP domain; that stretch reads LDYHNQVRGK…RRAVYLVCNY (141 aa).

The protein belongs to the CRISP family. N-glycosylated. As to expression, weakly expressed. Expressed at low level in prostate, mammary gland, salivary gland and thyroid gland.

The protein localises to the secreted. Functionally, serine protease inhibitor which displays weak inhibitory activity against trypsin. May play a role in facial patterning during embryonic development. The chain is Peptidase inhibitor 15 (PI15) from Homo sapiens (Human).